Consider the following 156-residue polypeptide: UPF0262 protein Jann_2882 (156 aa).

It belongs to the UPF0262 family.

This is UPF0262 protein Jann_2882 from Jannaschia sp. (strain CCS1).